A 245-amino-acid chain; its full sequence is Orotidine 5'-phosphate decarboxylase (245 aa).

Substrate-binding positions include aspartate 22, lysine 44, 71-80 (DLKFHDIPNT), threonine 131, arginine 192, glutamine 201, glycine 221, and arginine 222. Residue lysine 73 is the Proton donor of the active site.

Belongs to the OMP decarboxylase family. Type 1 subfamily. Homodimer.

The catalysed reaction is orotidine 5'-phosphate + H(+) = UMP + CO2. Its pathway is pyrimidine metabolism; UMP biosynthesis via de novo pathway; UMP from orotate: step 2/2. Catalyzes the decarboxylation of orotidine 5'-monophosphate (OMP) to uridine 5'-monophosphate (UMP). The polypeptide is Orotidine 5'-phosphate decarboxylase (Escherichia coli O127:H6 (strain E2348/69 / EPEC)).